The sequence spans 236 residues: MDFHVMTLFPDMIMDGLNTSITGRAIKSGVMSVTAHDIRDYSNDKHLKVDDYPYGGGAGMVMRAAPVCDCYEDIVKNIGKRPRVIYMTPQGYTFTQKMAEDFAKEDNLVILCGHYEGIDERALENIVTDYVSIGDYVLTGGELPAMVVIDTISRLVPGVLNNEESAETESFSDGLLEYPQYTRPADYNGQLVPEVLLSGHHANIEKWRHEKSIERTKKYRPDLYEEYVKKHSDEFR.

Residues G113 and 133 to 138 contribute to the S-adenosyl-L-methionine site; that span reads IGDYVL.

This sequence belongs to the RNA methyltransferase TrmD family. In terms of assembly, homodimer.

The protein resides in the cytoplasm. The enzyme catalyses guanosine(37) in tRNA + S-adenosyl-L-methionine = N(1)-methylguanosine(37) in tRNA + S-adenosyl-L-homocysteine + H(+). Functionally, specifically methylates guanosine-37 in various tRNAs. This is tRNA (guanine-N(1)-)-methyltransferase from Lachnospira eligens (strain ATCC 27750 / DSM 3376 / VPI C15-48 / C15-B4) (Eubacterium eligens).